A 251-amino-acid chain; its full sequence is Flap endonuclease Xni (251 aa).

Residue D104 coordinates Mg(2+). The 91-residue stretch at 160–250 (VLPRQLPDYW…SGNLQQLRLK (91 aa)) folds into the 5'-3' exonuclease domain. Residues L171, A172, P180, V182, and V185 each contribute to the K(+) site. Residues 184–189 (GVGAKT) form an interaction with DNA region.

It belongs to the Xni family. Mg(2+) is required as a cofactor. It depends on K(+) as a cofactor.

Its function is as follows. Has flap endonuclease activity. During DNA replication, flap endonucleases cleave the 5'-overhanging flap structure that is generated by displacement synthesis when DNA polymerase encounters the 5'-end of a downstream Okazaki fragment. The protein is Flap endonuclease Xni of Yersinia pseudotuberculosis serotype I (strain IP32953).